The primary structure comprises 117 residues: Large ribosomal subunit protein bL19 (117 aa).

The protein belongs to the bacterial ribosomal protein bL19 family.

This protein is located at the 30S-50S ribosomal subunit interface and may play a role in the structure and function of the aminoacyl-tRNA binding site. This chain is Large ribosomal subunit protein bL19, found in Aliivibrio salmonicida (strain LFI1238) (Vibrio salmonicida (strain LFI1238)).